Consider the following 440-residue polypeptide: Chromosome partition protein MukF (440 aa).

Residues 208 to 236 (LSETSGTLRELQDTLEAAGDKLQANLLRI) are leucine-zipper.

The protein belongs to the MukF family. Interacts, and probably forms a ternary complex, with MukE and MukB via its C-terminal region. The complex formation is stimulated by calcium or magnesium. It is required for an interaction between MukE and MukB.

It is found in the cytoplasm. The protein localises to the nucleoid. In terms of biological role, involved in chromosome condensation, segregation and cell cycle progression. May participate in facilitating chromosome segregation by condensation DNA from both sides of a centrally located replisome during cell division. Not required for mini-F plasmid partitioning. Probably acts via its interaction with MukB and MukE. Overexpression results in anucleate cells. It has a calcium binding activity. The chain is Chromosome partition protein MukF from Escherichia coli (strain UTI89 / UPEC).